The following is a 900-amino-acid chain: Endoglucanase H (900 aa).

Residues 1-44 (MKKRLLVSFLVLSIIVGLLSFQSLGNYNSGLKIGAWVGTQPSES) form the signal peptide. The GH26 domain occupies 45-298 (AIKSFQELQG…NSSPEALAAY (254 aa)). Catalysis depends on E131, which acts as the Proton donor. Catalysis depends on E244, which acts as the Nucleophile. A catalytic region spans residues 300-630 (EAIGAGSSNP…DTEILNALFN (331 aa)). The interval 303 to 326 (GAGSSNPTPTPTWTSTPPSSSPKA) is disordered. Positions 306–324 (SSNPTPTPTWTSTPPSSSP) are enriched in low complexity. The active-site Proton donor is the E460. E565 (nucleophile) is an active-site residue. The CBM11 domain maps to 655–900 (AVGEKMLDDF…LLKAISEIPI (246 aa)). A Dockerin domain is found at 827–900 (PSIKHGDLNF…LLKAISEIPI (74 aa)).

It in the N-terminal section; belongs to the glycosyl hydrolase 5 (cellulase A) family. The protein in the C-terminal section; belongs to the glycosyl hydrolase 26 family.

It carries out the reaction Endohydrolysis of (1-&gt;4)-beta-D-glucosidic linkages in cellulose, lichenin and cereal beta-D-glucans.. Functionally, this enzyme catalyzes the endohydrolysis of 1,4-beta-glucosidic linkages in cellulose, lichenin and cereal beta-D-glucans. This is Endoglucanase H (celH) from Acetivibrio thermocellus (strain ATCC 27405 / DSM 1237 / JCM 9322 / NBRC 103400 / NCIMB 10682 / NRRL B-4536 / VPI 7372) (Clostridium thermocellum).